Reading from the N-terminus, the 321-residue chain is Protease HtpX homolog (321 aa).

2 consecutive transmembrane segments (helical) span residues 6-26 and 28-48; these read TAML…LIGG and GGMM…YWNS. Residue His130 participates in Zn(2+) binding. The active site involves Glu131. His134 provides a ligand contact to Zn(2+). The next 2 helical transmembrane spans lie at 145–165 and 173–193; these read ITAT…FFGG and PLGF…AMLV. Glu202 contributes to the Zn(2+) binding site. The tract at residues 281-321 is disordered; that stretch reads EFSPRASTPPPSGDRPVRKSGSVPTTGWRRGNENERKGPWS. The span at 310 to 321 shows a compositional bias: basic and acidic residues; sequence RGNENERKGPWS.

It belongs to the peptidase M48B family. It depends on Zn(2+) as a cofactor.

The protein localises to the cell inner membrane. The chain is Protease HtpX homolog from Agrobacterium fabrum (strain C58 / ATCC 33970) (Agrobacterium tumefaciens (strain C58)).